A 319-amino-acid chain; its full sequence is Ribonucleoside-diphosphate reductase 2 subunit beta (319 aa).

Positions 67, 98, and 101 each coordinate Fe cation. Residue tyrosine 105 is part of the active site. Fe cation-binding residues include glutamate 158, glutamate 192, and histidine 195.

Belongs to the ribonucleoside diphosphate reductase small chain family. As to quaternary structure, tetramer of two alpha and two beta subunits. Requires Fe cation as cofactor.

The catalysed reaction is a 2'-deoxyribonucleoside 5'-diphosphate + [thioredoxin]-disulfide + H2O = a ribonucleoside 5'-diphosphate + [thioredoxin]-dithiol. Functionally, provides the precursors necessary for DNA synthesis. Catalyzes the biosynthesis of deoxyribonucleotides from the corresponding ribonucleotides. R2F contains the tyrosyl radical required for catalysis. This Escherichia coli (strain K12) protein is Ribonucleoside-diphosphate reductase 2 subunit beta (nrdF).